The following is a 500-amino-acid chain: Lysine--tRNA ligase (500 aa).

Residues Glu410 and Glu417 each contribute to the Mg(2+) site.

It belongs to the class-II aminoacyl-tRNA synthetase family. As to quaternary structure, homodimer. Mg(2+) is required as a cofactor.

It localises to the cytoplasm. The enzyme catalyses tRNA(Lys) + L-lysine + ATP = L-lysyl-tRNA(Lys) + AMP + diphosphate. This Shewanella sediminis (strain HAW-EB3) protein is Lysine--tRNA ligase.